We begin with the raw amino-acid sequence, 263 residues long: Hydroxyacylglutathione hydrolase (263 aa).

Zn(2+)-binding residues include histidine 56, histidine 58, aspartate 60, histidine 61, histidine 115, aspartate 135, and histidine 175.

It belongs to the metallo-beta-lactamase superfamily. Glyoxalase II family. As to quaternary structure, monomer. Zn(2+) is required as a cofactor.

It catalyses the reaction an S-(2-hydroxyacyl)glutathione + H2O = a 2-hydroxy carboxylate + glutathione + H(+). Its pathway is secondary metabolite metabolism; methylglyoxal degradation; (R)-lactate from methylglyoxal: step 2/2. Thiolesterase that catalyzes the hydrolysis of S-D-lactoyl-glutathione to form glutathione and D-lactic acid. The protein is Hydroxyacylglutathione hydrolase of Polaromonas sp. (strain JS666 / ATCC BAA-500).